A 623-amino-acid chain; its full sequence is NAD-dependent malic enzyme, mitochondrial (623 aa).

The transit peptide at 1–31 (MLVLCSRSRLTSSLIRRLKDQIANVSNHRSF) directs the protein to the mitochondrion. Fumarate is bound by residues Arg88 and Arg122. Ser143 acts as the Proton donor in catalysis. Arg196 contributes to the (S)-malate binding site. Arg196 lines the NAD(+) pocket. Residue Lys214 is the Proton acceptor of the active site. A divalent metal cation-binding residues include Glu285 and Asp286. NAD(+) is bound at residue Asn289. An a divalent metal cation-binding site is contributed by Asp309. Residue Ala345 participates in NAD(+) binding. (S)-malate is bound by residues Asn464 and Asn509.

The protein belongs to the malic enzymes family. As to quaternary structure, heterodimer of two related subunits. Requires Mg(2+) as cofactor. Mn(2+) serves as cofactor.

The protein resides in the mitochondrion matrix. The enzyme catalyses (S)-malate + NAD(+) = pyruvate + CO2 + NADH. It functions in the pathway photosynthesis; C4 acid pathway. This chain is NAD-dependent malic enzyme, mitochondrial, found in Amaranthus hypochondriacus (Prince-of-Wales feather).